Consider the following 252-residue polypeptide: 5-oxoprolinase subunit A (252 aa).

The protein belongs to the LamB/PxpA family. In terms of assembly, forms a complex composed of PxpA, PxpB and PxpC.

The enzyme catalyses 5-oxo-L-proline + ATP + 2 H2O = L-glutamate + ADP + phosphate + H(+). Its function is as follows. Catalyzes the cleavage of 5-oxoproline to form L-glutamate coupled to the hydrolysis of ATP to ADP and inorganic phosphate. The polypeptide is 5-oxoprolinase subunit A (Staphylococcus carnosus (strain TM300)).